The sequence spans 371 residues: Peptide chain release factor 2 (371 aa).

The residue at position 250 (glutamine 250) is an N5-methylglutamine.

This sequence belongs to the prokaryotic/mitochondrial release factor family. In terms of processing, methylated by PrmC. Methylation increases the termination efficiency of RF2.

It localises to the cytoplasm. Its function is as follows. Peptide chain release factor 2 directs the termination of translation in response to the peptide chain termination codons UGA and UAA. This chain is Peptide chain release factor 2, found in Paramagnetospirillum magneticum (strain ATCC 700264 / AMB-1) (Magnetospirillum magneticum).